A 201-amino-acid polypeptide reads, in one-letter code: Small ribosomal subunit protein uS4c (201 aa).

The segment at L15 to Y45 is disordered. Residues H35 to Y45 are compositionally biased toward basic and acidic residues. One can recognise an S4 RNA-binding domain in the interval M90–L153.

This sequence belongs to the universal ribosomal protein uS4 family. As to quaternary structure, part of the 30S ribosomal subunit. Contacts protein S5. The interaction surface between S4 and S5 is involved in control of translational fidelity.

It localises to the plastid. Its subcellular location is the chloroplast. Its function is as follows. One of the primary rRNA binding proteins, it binds directly to 16S rRNA where it nucleates assembly of the body of the 30S subunit. In terms of biological role, with S5 and S12 plays an important role in translational accuracy. The chain is Small ribosomal subunit protein uS4c (rps4) from Pyropia yezoensis (Susabi-nori).